Reading from the N-terminus, the 256-residue chain is 5'-nucleotidase YutF (256 aa).

It belongs to the HAD-like hydrolase superfamily. NagD family. As to quaternary structure, homodimer. The cofactor is Mg(2+).

The protein localises to the cytoplasm. It catalyses the reaction a ribonucleoside 5'-phosphate + H2O = a ribonucleoside + phosphate. The enzyme catalyses XMP + H2O = xanthosine + phosphate. Functionally, catalyzes the hydrolysis of various purine and pyrimidine 5'-nucleotides, showing preference for 5'-nucleoside monophosphates and exhibiting the highest catalytic activity toward 5'-XMP. Also shows a relatively high phosphohydrolase activity toward the nucleotide precursors ribose-5-phosphate (R5P) and 5-phosphoribosyl-1-pyrophosphate (PRPP), and toward the non-natural substrate p-nitrophenyl phosphate (pNPP). This chain is 5'-nucleotidase YutF (yutF), found in Bacillus subtilis (strain 168).